The primary structure comprises 508 residues: Photosystem II CP47 reaction center protein (508 aa).

6 consecutive transmembrane segments (helical) span residues 21–36 (SVHIMHTALVAGWAGS), 101–115 (IAFSGLCFLAAIWHW), 140–156 (GIHLFLSGVACFGFGAF), 203–218 (IAAGTLGILAGLFHLS), 237–252 (VLSSSIAAVFFAAFVV), and 457–472 (SFALLFFFGHIWHGAR).

The protein belongs to the PsbB/PsbC family. PsbB subfamily. PSII is composed of 1 copy each of membrane proteins PsbA, PsbB, PsbC, PsbD, PsbE, PsbF, PsbH, PsbI, PsbJ, PsbK, PsbL, PsbM, PsbT, PsbX, PsbY, PsbZ, Psb30/Ycf12, at least 3 peripheral proteins of the oxygen-evolving complex and a large number of cofactors. It forms dimeric complexes. It depends on Binds multiple chlorophylls. PSII binds additional chlorophylls, carotenoids and specific lipids. as a cofactor.

The protein resides in the plastid membrane. In terms of biological role, one of the components of the core complex of photosystem II (PSII). It binds chlorophyll and helps catalyze the primary light-induced photochemical processes of PSII. PSII is a light-driven water:plastoquinone oxidoreductase, using light energy to abstract electrons from H(2)O, generating O(2) and a proton gradient subsequently used for ATP formation. The chain is Photosystem II CP47 reaction center protein from Cuscuta reflexa (Southern Asian dodder).